Here is a 356-residue protein sequence, read N- to C-terminus: Tyrosine recombinase XerS (356 aa).

The Core-binding (CB) domain maps to 16-121 (LMPWFVLEYY…ALSSLYKYLT (106 aa)). The Tyr recombinase domain maps to 169 to 354 (KFLDYVENEY…VNDEQKNALD (186 aa)). Catalysis depends on residues arginine 210, lysine 234, histidine 306, arginine 309, and histidine 332. Tyrosine 341 (O-(3'-phospho-DNA)-tyrosine intermediate) is an active-site residue.

The protein belongs to the 'phage' integrase family. XerS subfamily.

It is found in the cytoplasm. With respect to regulation, ftsK is required for recombination. Site-specific tyrosine recombinase, which acts by catalyzing the cutting and rejoining of the recombining DNA molecules. Essential to convert dimers of the bacterial chromosome into monomers to permit their segregation at cell division. The polypeptide is Tyrosine recombinase XerS (Streptococcus thermophilus (strain ATCC BAA-491 / LMD-9)).